We begin with the raw amino-acid sequence, 1177 residues long: Transcription-repair-coupling factor (1177 aa).

A Helicase ATP-binding domain is found at D638–I799. G651–T658 provides a ligand contact to ATP. Residues D752 to Q755 carry the DEEQ box motif. Residues L820–T974 form the Helicase C-terminal domain.

The protein in the N-terminal section; belongs to the UvrB family. In the C-terminal section; belongs to the helicase family. RecG subfamily.

The protein localises to the cytoplasm. Its function is as follows. Couples transcription and DNA repair by recognizing RNA polymerase (RNAP) stalled at DNA lesions. Mediates ATP-dependent release of RNAP and its truncated transcript from the DNA, and recruitment of nucleotide excision repair machinery to the damaged site. Probably required to repair non-bulky DNA lesions. The polypeptide is Transcription-repair-coupling factor (Bacillus subtilis (strain 168)).